A 265-amino-acid polypeptide reads, in one-letter code: Aquaporin-5 (265 aa).

Over 1–12 (MKKEVCSAAFLK) the chain is Cytoplasmic. A helical transmembrane segment spans residues 13 to 33 (AVFAEFLATLIFVFFGLGSAL). Topologically, residues 34 to 39 (KWPSAM) are extracellular. The helical transmembrane segment at 40 to 60 (PSVLQISLAFGLAIGTMAQAL) threads the bilayer. Topologically, residues 61–65 (GPVSG) are cytoplasmic. The discontinuously helical intramembrane region spans 66–74 (GHMNPAITL). The NPA 1 motif lies at 69 to 71 (NPA). Over 75–87 (ALLVGNQISLLRA) the chain is Cytoplasmic. The chain crosses the membrane as a helical span at residues 88 to 108 (VFYLVAQLVGAIAGAAILYGL). At 109–126 (APYNARSNLAVNALNNNT) the chain is on the extracellular side. Residues Asn124 and Asn125 are each glycosylated (N-linked (GlcNAc...) asparagine). A helical membrane pass occupies residues 127–147 (TAGQAVVAEMILTFQLALCVF). Over 148-158 (SSTDSRRTSPV) the chain is Cytoplasmic. The helical transmembrane segment at 159-179 (GSPALSIGLSVTLGHLVGIYF) threads the bilayer. Thr180 is a topological domain (extracellular). The discontinuously helical intramembrane region spans 181-191 (GCSMNPARSFG). An NPA 2 motif is present at residues 185-187 (NPA). At 192–203 (PAVIMSRFSSAH) the chain is on the extracellular side. Residues 204–224 (WVFWVGPIVGAATAAIIYFYL) traverse the membrane as a helical segment. The Cytoplasmic segment spans residues 225-265 (LFPHSLSLSDRVAILKGTYEPDEDWEESQEERKKTMELTAH).

The protein belongs to the MIP/aquaporin (TC 1.A.8) family. Homotetramer; each monomer provides an independent water pore. Interacts with TRPV4; the interaction is probably indirect and regulates TRPV4 activation by hypotonicity.

The protein resides in the apical cell membrane. It is found in the cell membrane. The protein localises to the cytoplasmic vesicle membrane. It carries out the reaction H2O(in) = H2O(out). Its function is as follows. Aquaporins form homotetrameric transmembrane channels, with each monomer independently mediating water transport across the plasma membrane along its osmotic gradient. Plays an important role in fluid secretion in salivary glands. Required for TRPV4 activation by hypotonicity. Together with TRPV4, controls regulatory volume decrease in salivary epithelial cells. Seems to play a redundant role in water transport in the eye, lung and in sweat glands. The chain is Aquaporin-5 from Ovis aries (Sheep).